A 432-amino-acid polypeptide reads, in one-letter code: Asparagine--tRNA ligase (432 aa).

It belongs to the class-II aminoacyl-tRNA synthetase family. In terms of assembly, homodimer.

The protein localises to the cytoplasm. It catalyses the reaction tRNA(Asn) + L-asparagine + ATP = L-asparaginyl-tRNA(Asn) + AMP + diphosphate + H(+). This is Asparagine--tRNA ligase from Lactobacillus johnsonii (strain CNCM I-12250 / La1 / NCC 533).